The chain runs to 95 residues: uncharacterized protein (95 aa).

Residues 3-23 traverse the membrane as a helical segment; it reads FVIIIAILLLGISLILAFTVL.

It localises to the membrane. This is an uncharacterized protein from Methanocaldococcus jannaschii (strain ATCC 43067 / DSM 2661 / JAL-1 / JCM 10045 / NBRC 100440) (Methanococcus jannaschii).